Here is a 375-residue protein sequence, read N- to C-terminus: Holliday junction branch migration complex subunit RuvB (375 aa).

The disordered stretch occupies residues 1-50 (MAIVSSKSPDPAERRSQAKTKPSVSEPQDSLVRPQAAPEESQRPEDQIRP). Positions 13-209 (ERRSQAKTKP…FGLVQRLRFY (197 aa)) are large ATPase domain (RuvB-L). A compositionally biased stretch (polar residues) spans 19–28 (KTKPSVSEPQ). The segment covering 40 to 49 (ESQRPEDQIR) has biased composition (basic and acidic residues). ATP-binding positions include Ile-48, Arg-49, Gly-90, Lys-93, Thr-94, Thr-95, 156-158 (EDF), Arg-199, Tyr-209, and Arg-246. Thr-94 serves as a coordination point for Mg(2+). The interval 210–280 (EVEALTDIVQ…IAATALELYN (71 aa)) is small ATPAse domain (RuvB-S). The segment at 283-375 (PCGLDWTDRR…LQQLLTEPET (93 aa)) is head domain (RuvB-H). Arg-338 and Arg-343 together coordinate DNA.

Belongs to the RuvB family. In terms of assembly, homohexamer. Forms an RuvA(8)-RuvB(12)-Holliday junction (HJ) complex. HJ DNA is sandwiched between 2 RuvA tetramers; dsDNA enters through RuvA and exits via RuvB. An RuvB hexamer assembles on each DNA strand where it exits the tetramer. Each RuvB hexamer is contacted by two RuvA subunits (via domain III) on 2 adjacent RuvB subunits; this complex drives branch migration. In the full resolvosome a probable DNA-RuvA(4)-RuvB(12)-RuvC(2) complex forms which resolves the HJ.

The protein resides in the cytoplasm. It carries out the reaction ATP + H2O = ADP + phosphate + H(+). The RuvA-RuvB-RuvC complex processes Holliday junction (HJ) DNA during genetic recombination and DNA repair, while the RuvA-RuvB complex plays an important role in the rescue of blocked DNA replication forks via replication fork reversal (RFR). RuvA specifically binds to HJ cruciform DNA, conferring on it an open structure. The RuvB hexamer acts as an ATP-dependent pump, pulling dsDNA into and through the RuvAB complex. RuvB forms 2 homohexamers on either side of HJ DNA bound by 1 or 2 RuvA tetramers; 4 subunits per hexamer contact DNA at a time. Coordinated motions by a converter formed by DNA-disengaged RuvB subunits stimulates ATP hydrolysis and nucleotide exchange. Immobilization of the converter enables RuvB to convert the ATP-contained energy into a lever motion, pulling 2 nucleotides of DNA out of the RuvA tetramer per ATP hydrolyzed, thus driving DNA branch migration. The RuvB motors rotate together with the DNA substrate, which together with the progressing nucleotide cycle form the mechanistic basis for DNA recombination by continuous HJ branch migration. Branch migration allows RuvC to scan DNA until it finds its consensus sequence, where it cleaves and resolves cruciform DNA. The chain is Holliday junction branch migration complex subunit RuvB from Synechococcus elongatus (strain ATCC 33912 / PCC 7942 / FACHB-805) (Anacystis nidulans R2).